Here is a 917-residue protein sequence, read N- to C-terminus: Hexokinase-1 (917 aa).

At M1 the chain carries N-acetylmethionine. The tract at residues 1-10 (MIAAQLLAYY) is mitochondrial-binding peptide (MBP). Hexokinase domains are found at residues 16-458 (DDQV…MVTA) and 464-906 (AEQH…LITA). ATP contacts are provided by residues R30 and 84 to 89 (DLGGSS). The segment at 73-207 (DGSEKGDFIA…DYDANIVAVV (135 aa)) is hexokinase small subdomain 1. Position 84-91 (84-91 (DLGGSSFR)) interacts with D-glucose 6-phosphate. D-glucose-binding positions include S155, 172-173 (TK), and 208-209 (ND). A hexokinase large subdomain 1 region spans residues 208 to 447 (NDTVGTMMTC…SDVRFLLSES (240 aa)). The D-glucose 6-phosphate site is built by D209 and T232. D-glucose is bound by residues N235, E260, and 291-294 (QLFE). Residue S337 is modified to Phosphoserine. N345 contributes to the ATP binding site. Position 413–415 (413–415 (DGS)) interacts with D-glucose 6-phosphate. 425-426 (RR) serves as a coordination point for ATP. Residues S449 and 532-536 (DLGGT) contribute to the D-glucose 6-phosphate site. The interval 521–655 (DGTENGDFLA…EFDLDVVAVV (135 aa)) is hexokinase small subdomain 2. 532–537 (DLGGTN) contributes to the ATP binding site. D-glucose contacts are provided by residues 603–604 (SF), 620–621 (TK), and 656–657 (ND). Residues 656 to 895 (NDTVGTMMTC…CNVSFLLSED (240 aa)) form a hexokinase large subdomain 2 region. D-glucose 6-phosphate is bound by residues D657 and T680. T680 serves as a coordination point for ATP. D-glucose contacts are provided by residues 682–683 (SN), E708, and E742. Residues 747–748 (GM), 784–788 (TKFLS), and 863–867 (TLYKL) contribute to the ATP site. D-glucose 6-phosphate-binding positions include 861–863 (DGT) and S897.

Belongs to the hexokinase family. Monomer. Interacts with RABL2/RABL2A; binds preferentially to GTP-bound RABL2. Interacts with VDAC1. The HK1-VDAC1 complex interacts with ATF2. Interacts (via N-terminal spermatogenic cell-specific region) with PFKM (via C-terminus). Interacts with SMAD5. Isoform 2: Erythrocyte specific. Isoform 3: Testis-specific. Isoform 4: Testis-specific.

Its subcellular location is the mitochondrion outer membrane. The protein resides in the cytoplasm. The protein localises to the cytosol. It catalyses the reaction a D-hexose + ATP = a D-hexose 6-phosphate + ADP + H(+). It carries out the reaction D-fructose + ATP = D-fructose 6-phosphate + ADP + H(+). The catalysed reaction is D-glucose + ATP = D-glucose 6-phosphate + ADP + H(+). The enzyme catalyses D-mannose + ATP = D-mannose 6-phosphate + ADP + H(+). It catalyses the reaction D-glucosamine + ATP = D-glucosamine 6-phosphate + ADP + H(+). It functions in the pathway carbohydrate metabolism; hexose metabolism. Its pathway is carbohydrate degradation; glycolysis; D-glyceraldehyde 3-phosphate and glycerone phosphate from D-glucose: step 1/4. With respect to regulation, hexokinase is an allosteric enzyme inhibited by its product D-glucose 6-phosphate. Hexokinase activity is inhibited by N-acetyl-D-glucosamine. Functionally, catalyzes the phosphorylation of various hexoses, such as D-glucose, D-glucosamine, D-fructose, D-mannose and 2-deoxy-D-glucose, to hexose 6-phosphate (D-glucose 6-phosphate, D-glucosamine 6-phosphate, D-fructose 6-phosphate, D-mannose 6-phosphate and 2-deoxy-D-glucose 6-phosphate, respectively). Does not phosphorylate N-acetyl-D-glucosamine. Mediates the initial step of glycolysis by catalyzing phosphorylation of D-glucose to D-glucose 6-phosphate. Involved in innate immunity and inflammation by acting as a pattern recognition receptor for bacterial peptidoglycan. When released in the cytosol, N-acetyl-D-glucosamine component of bacterial peptidoglycan inhibits the hexokinase activity of HK1 and causes its dissociation from mitochondrial outer membrane, thereby activating the NLRP3 inflammasome. The sequence is that of Hexokinase-1 from Homo sapiens (Human).